Reading from the N-terminus, the 412-residue chain is UPF0754 membrane protein Synpcc7942_1098 (412 aa).

2 consecutive transmembrane segments (helical) span residues 8-28 and 390-410; these read LWLLPPVVGGIIGYFTNDLAI and IGGVLGVLLGCVQSLINVWSL.

Belongs to the UPF0754 family.

The protein localises to the cell inner membrane. The chain is UPF0754 membrane protein Synpcc7942_1098 from Synechococcus elongatus (strain ATCC 33912 / PCC 7942 / FACHB-805) (Anacystis nidulans R2).